A 374-amino-acid polypeptide reads, in one-letter code: Polar flagellin E (374 aa).

Residues 102–126 adopt a coiled-coil conformation; that stretch reads SHEQDDRKSLQQEVIALQDELDRVA.

The protein belongs to the bacterial flagellin family. As to quaternary structure, heteromer of multiple flagellin subunits including FlaA, FlaB/D, FlaC, FlaE and FlaF.

Its subcellular location is the secreted. It is found in the bacterial flagellum. Flagellin is the subunit protein which polymerizes to form the filaments of bacterial flagella. The protein is Polar flagellin E (flaE) of Vibrio parahaemolyticus serotype O3:K6 (strain RIMD 2210633).